A 448-amino-acid polypeptide reads, in one-letter code: Adenosylhomocysteinase (448 aa).

Residues Thr-61, Asp-136, and Glu-161 each coordinate substrate. 162 to 164 provides a ligand contact to NAD(+); the sequence is TTA. Substrate is bound by residues Lys-191 and Asp-195. Residues Asn-196, 225–230, Glu-248, Asn-283, 304–306, and Asn-360 contribute to the NAD(+) site; these read GYGDVG and IGH.

It belongs to the adenosylhomocysteinase family. NAD(+) is required as a cofactor.

It localises to the cytoplasm. The enzyme catalyses S-adenosyl-L-homocysteine + H2O = L-homocysteine + adenosine. The protein operates within amino-acid biosynthesis; L-homocysteine biosynthesis; L-homocysteine from S-adenosyl-L-homocysteine: step 1/1. May play a key role in the regulation of the intracellular concentration of adenosylhomocysteine. The chain is Adenosylhomocysteinase from Rhodopirellula baltica (strain DSM 10527 / NCIMB 13988 / SH1).